Reading from the N-terminus, the 196-residue chain is Homeobox protein XENK-2 (196 aa).

The segment at 48 to 72 (PSADESPDNDKELSSNPDSGKKRKR) is disordered. Residues 69–128 (KRKRRVLFSKAQTYELERRFRQQRYLSAPEREHLASLIRLTPTQVKIWFQNHRYKMKRAR) constitute a DNA-binding region (homeobox).

Belongs to the NK-2 homeobox family. In terms of tissue distribution, forebrain and midbrain.

The protein localises to the nucleus. Defines dorsal-ventral domains in developing brain. May play a role in defining positional information along the anterior-posterior (a/p) axis and the dorsal-ventral (d/v) axis of the developing nervous system. May be involved in determining positional or boundary information rather than determining a given cell type. The chain is Homeobox protein XENK-2 from Xenopus laevis (African clawed frog).